The following is a 221-amino-acid chain: Elongation factor Ts (221 aa).

Residues 82-85 (TDFV) are involved in Mg(2+) ion dislocation from EF-Tu.

Belongs to the EF-Ts family.

The protein localises to the cytoplasm. In terms of biological role, associates with the EF-Tu.GDP complex and induces the exchange of GDP to GTP. It remains bound to the aminoacyl-tRNA.EF-Tu.GTP complex up to the GTP hydrolysis stage on the ribosome. The sequence is that of Elongation factor Ts from Synechococcus elongatus (strain ATCC 33912 / PCC 7942 / FACHB-805) (Anacystis nidulans R2).